Consider the following 695-residue polypeptide: Probable Rho-GTPase-activating protein 7 (695 aa).

Residues 1 to 11 (MLSAPSSSTTP) show a composition bias toward low complexity. The interval 1 to 26 (MLSAPSSSTTPASPPTSPPNTTSSDD) is disordered. One can recognise an F-BAR domain in the interval 33–307 (PKVEAILNSE…ALDNINANTD (275 aa)). The tract at residues 320-499 (EDNKNPTDAS…SVSPQPSSPT (180 aa)) is disordered. 2 stretches are compositionally biased toward polar residues: residues 336–348 (PPSS…SAGK) and 366–382 (PLQN…NPSV). Low complexity-rich tracts occupy residues 383–432 (ASPA…RTSS), 458–467 (PIQTTTIQTS), and 488–499 (PTSVSPQPSSPT). Phosphoserine is present on residues Ser496 and Ser497. The region spanning 506-692 (ARLDAIILRE…ILIDYCFTIF (187 aa)) is the Rho-GAP domain.

This is Probable Rho-GTPase-activating protein 7 (rga7) from Schizosaccharomyces pombe (strain 972 / ATCC 24843) (Fission yeast).